We begin with the raw amino-acid sequence, 189 residues long: Putative 3-methyladenine DNA glycosylase (189 aa).

This sequence belongs to the DNA glycosylase MPG family.

The protein is Putative 3-methyladenine DNA glycosylase (mag) of Corynebacterium glutamicum (strain ATCC 13032 / DSM 20300 / JCM 1318 / BCRC 11384 / CCUG 27702 / LMG 3730 / NBRC 12168 / NCIMB 10025 / NRRL B-2784 / 534).